The following is a 94-amino-acid chain: Large ribosomal subunit protein bL27 (94 aa).

Positions 1–9 (MLKLNLQFF) are excised as a propeptide. The interval 12–32 (KKGVSSTKNGRDSESKRLGAK) is disordered. The segment covering 20–32 (NGRDSESKRLGAK) has biased composition (basic and acidic residues).

The protein belongs to the bacterial ribosomal protein bL27 family. In terms of processing, the N-terminus is cleaved by ribosomal processing cysteine protease Prp.

The sequence is that of Large ribosomal subunit protein bL27 from Staphylococcus carnosus (strain TM300).